A 124-amino-acid chain; its full sequence is Nascent polypeptide-associated complex protein (124 aa).

One can recognise an NAC-A/B domain in the interval 7 to 74; sequence GLNPRKMKQM…PESRERGDSG (68 aa). A disordered region spans residues 53–124; sequence AQGQQTYQVV…DLAAAVQKLE (72 aa). Residues 74–93 show a composition bias toward acidic residues; sequence GSEDDSETESGGEFSEDDVE.

This sequence belongs to the NAC-alpha family. Homodimer. Interacts with the ribosome. Binds ribosomal RNA.

Contacts the emerging nascent chain on the ribosome. This Natronomonas pharaonis (strain ATCC 35678 / DSM 2160 / CIP 103997 / JCM 8858 / NBRC 14720 / NCIMB 2260 / Gabara) (Halobacterium pharaonis) protein is Nascent polypeptide-associated complex protein.